A 251-amino-acid chain; its full sequence is Aspartate/glutamate leucyltransferase (251 aa).

The protein belongs to the R-transferase family. Bpt subfamily.

It localises to the cytoplasm. The catalysed reaction is N-terminal L-glutamyl-[protein] + L-leucyl-tRNA(Leu) = N-terminal L-leucyl-L-glutamyl-[protein] + tRNA(Leu) + H(+). It carries out the reaction N-terminal L-aspartyl-[protein] + L-leucyl-tRNA(Leu) = N-terminal L-leucyl-L-aspartyl-[protein] + tRNA(Leu) + H(+). Functionally, functions in the N-end rule pathway of protein degradation where it conjugates Leu from its aminoacyl-tRNA to the N-termini of proteins containing an N-terminal aspartate or glutamate. The polypeptide is Aspartate/glutamate leucyltransferase (Nitrosospira multiformis (strain ATCC 25196 / NCIMB 11849 / C 71)).